Consider the following 151-residue polypeptide: 3-hydroxyacyl-[acyl-carrier-protein] dehydratase FabZ (151 aa).

H54 is a catalytic residue.

The protein belongs to the thioester dehydratase family. FabZ subfamily.

It localises to the cytoplasm. It carries out the reaction a (3R)-hydroxyacyl-[ACP] = a (2E)-enoyl-[ACP] + H2O. In terms of biological role, involved in unsaturated fatty acids biosynthesis. Catalyzes the dehydration of short chain beta-hydroxyacyl-ACPs and long chain saturated and unsaturated beta-hydroxyacyl-ACPs. This Blochmanniella pennsylvanica (strain BPEN) protein is 3-hydroxyacyl-[acyl-carrier-protein] dehydratase FabZ.